The following is a 407-amino-acid chain: Argininosuccinate synthase (407 aa).

Residues 16-24 and alanine 44 each bind ATP; that span reads AYSGGLDTS. L-citrulline-binding residues include tyrosine 96 and serine 101. Glycine 126 contributes to the ATP binding site. Positions 128, 132, and 133 each coordinate L-aspartate. Position 132 (asparagine 132) interacts with L-citrulline. L-citrulline contacts are provided by arginine 136, serine 185, serine 194, glutamate 270, and tyrosine 282.

The protein belongs to the argininosuccinate synthase family. Type 1 subfamily. As to quaternary structure, homotetramer.

It localises to the cytoplasm. It catalyses the reaction L-citrulline + L-aspartate + ATP = 2-(N(omega)-L-arginino)succinate + AMP + diphosphate + H(+). Its pathway is amino-acid biosynthesis; L-arginine biosynthesis; L-arginine from L-ornithine and carbamoyl phosphate: step 2/3. The polypeptide is Argininosuccinate synthase (Shewanella sp. (strain ANA-3)).